The following is a 143-amino-acid chain: Large ribosomal subunit protein uL11 (143 aa).

Belongs to the universal ribosomal protein uL11 family. As to quaternary structure, part of the ribosomal stalk of the 50S ribosomal subunit. Interacts with L10 and the large rRNA to form the base of the stalk. L10 forms an elongated spine to which L12 dimers bind in a sequential fashion forming a multimeric L10(L12)X complex. Post-translationally, one or more lysine residues are methylated.

Forms part of the ribosomal stalk which helps the ribosome interact with GTP-bound translation factors. The polypeptide is Large ribosomal subunit protein uL11 (Chromobacterium violaceum (strain ATCC 12472 / DSM 30191 / JCM 1249 / CCUG 213 / NBRC 12614 / NCIMB 9131 / NCTC 9757 / MK)).